The following is a 90-amino-acid chain: MANSKQAKKRIIQAERNRQHNVARRSMMRTFLKKTAYAIEKGDVEAAKENFAKVVPILDKYASKGLIHKNKAARHKSRLSAKIKALATAA.

The protein belongs to the bacterial ribosomal protein bS20 family.

Binds directly to 16S ribosomal RNA. This is Small ribosomal subunit protein bS20 from Francisella tularensis subsp. tularensis (strain FSC 198).